The sequence spans 328 residues: DNA-directed RNA polymerase subunit alpha (328 aa).

The alpha N-terminal domain (alpha-NTD) stretch occupies residues 1–231 (MIYQMQMPTK…DHITFFANFS (231 aa)). The alpha C-terminal domain (alpha-CTD) stretch occupies residues 247–328 (DEFESMRKLL…MDITRYQLKG (82 aa)).

This sequence belongs to the RNA polymerase alpha chain family. As to quaternary structure, homodimer. The RNAP catalytic core consists of 2 alpha, 1 beta, 1 beta' and 1 omega subunit. When a sigma factor is associated with the core the holoenzyme is formed, which can initiate transcription.

It catalyses the reaction RNA(n) + a ribonucleoside 5'-triphosphate = RNA(n+1) + diphosphate. Its function is as follows. DNA-dependent RNA polymerase catalyzes the transcription of DNA into RNA using the four ribonucleoside triphosphates as substrates. The polypeptide is DNA-directed RNA polymerase subunit alpha (Chlorobaculum tepidum (strain ATCC 49652 / DSM 12025 / NBRC 103806 / TLS) (Chlorobium tepidum)).